We begin with the raw amino-acid sequence, 634 residues long: Calcium up-regulated protein D (634 aa).

A disordered region spans residues 1 to 23 (MINIEDISKSSNQSEEKQLKSTS). Ricin B-type lectin domains are found at residues 27-146 (KPKY…WTTF) and 117-250 (PGNG…WGIN).

The protein belongs to the cup family.

The protein resides in the cytoplasm. The protein localises to the membrane. May play an important role in stabilizing and/or regulating the cell membrane during Ca(2+) stress or certain stages of development. The polypeptide is Calcium up-regulated protein D (cupD) (Dictyostelium discoideum (Social amoeba)).